The chain runs to 575 residues: MNSSQACFFHFSLRPISLSHPSYAFLSKRDPFLCSQPRKCLTTNLNMSRTRQGHSIQMNRRHLLMKERKSFSINYSDKFRDDSMSSEEMHTDALDVEIIPPDSQDIRNSQNSAVSNTLQDDRPKSFRNRFLDFVRISSVLNTAAERFFKSEIRRRLFVTAVLLVLSRVGYFIPLPGFDRRLIPQDYLSFVSGSVEELGEFGAEIKLSLFQLGLSPQIIASIIMQVLCHVLPSLVKLRKEGLDGHEKIKSYIWWLSFFFAIVEALVVAYTSLQYSVFAATAQVKHVMMTSSLLVCGAMTMTWLCDTISESGFGHGSSLIICVGILTGYTETLHKMLNQISGSFSNWLPYLLGLLGIFTVVTMFAVVVTEGCRKIKLQYYGFKLASASREGSPITEVEPYIPFNINPAGMQPVLTTTYLLAFPSILASILGSPFLLNMKEILNPESTVGAPPWVYYSIYAFFVFLFNIFDIANLPKEIADYLNKMGARIPNIKPGKATIEYLTKIQASTRFWGGLLLSFLATASTVLDHYLRSINQGFSIGFTSVLIIVGSIIELRRSYHAYNVMPSLSKALKRYGV.

The N-terminal 34 residues, 1 to 34 (MNSSQACFFHFSLRPISLSHPSYAFLSKRDPFLC), are a transit peptide targeting the chloroplast. The next 10 helical transmembrane spans lie at 157–177 (FVTA…LPGF), 206–226 (LSLF…MQVL), 251–271 (IWWL…YTSL), 285–305 (VMMT…LCDT), 306–326 (ISES…ILTG), 346–366 (LPYL…AVVV), 414–434 (TTYL…PFLL), 447–467 (GAPP…FNIF), 509–529 (FWGG…DHYL), and 531–551 (SINQ…GSII).

The protein belongs to the SecY/SEC61-alpha family. As to quaternary structure, part of a second Sec protein translocation apparatus. Interacts probably with SECA2. In terms of tissue distribution, ubiquitous.

Its subcellular location is the plastid. The protein resides in the chloroplast membrane. It localises to the amyloplast membrane. It is found in the chloroplast thylakoid membrane. Involved in protein export. Probably interacts with other proteins to allow the postimport or conservative sorting pathway for inner membrane proteins in plastids. Central subunit of the protein translocation channel SecYE. Consists of two halves formed by TMs 1-5 and 6-10. These two domains form a lateral gate at the front which open onto the bilayer between TMs 2 and 7, and are clamped together by SecE at the back. The channel is closed by both a pore ring composed of hydrophobic SecY resides and a short helix (helix 2A) on the extracellular side of the membrane which forms a plug. This chain is Preprotein translocase subunit SCY2, chloroplastic (SCY2), found in Arabidopsis thaliana (Mouse-ear cress).